Here is a 127-residue protein sequence, read N- to C-terminus: Mitochondrial pyruvate carrier 2 (127 aa).

Residues 2–40 are Mitochondrial matrix-facing; sequence SAAGARGLRATYHRLLDKVELMLPEKLRPLYNHPAGPRT. The helical transmembrane segment at 41 to 61 threads the bilayer; it reads VFFWAPIMKWGLVCAGLADMA. Residues 62–72 lie on the Mitochondrial intermembrane side of the membrane; that stretch reads RPAEKLSTAQS. A helical membrane pass occupies residues 73–90; the sequence is AVLMATGFIWSRYSLVII. The Mitochondrial matrix portion of the chain corresponds to 91–95; that stretch reads PKNWS. Residues 96 to 115 traverse the membrane as a helical segment; that stretch reads LFAVNFFVGAAGASQLFRIW. Over 116-127 the chain is Mitochondrial intermembrane; it reads RYNQELKAKAHK.

This sequence belongs to the mitochondrial pyruvate carrier (MPC) (TC 2.A.105) family. In terms of assembly, homodimer. Homooligomer. Forms heterodimers with MPC1 and MPC1L. The heterodimer is the more stable and dominant form.

The protein localises to the mitochondrion inner membrane. The catalysed reaction is pyruvate(out) + H(+)(out) = pyruvate(in) + H(+)(in). Functionally, mediates the uptake of pyruvate into mitochondria. The protein is Mitochondrial pyruvate carrier 2 (MPC2) of Homo sapiens (Human).